The primary structure comprises 308 residues: Ribosomal RNA small subunit methyltransferase H (308 aa).

S-adenosyl-L-methionine-binding positions include 38-40, aspartate 58, phenylalanine 82, aspartate 99, and glutamine 106; that span reads GGH.

Belongs to the methyltransferase superfamily. RsmH family.

It localises to the cytoplasm. It catalyses the reaction cytidine(1402) in 16S rRNA + S-adenosyl-L-methionine = N(4)-methylcytidine(1402) in 16S rRNA + S-adenosyl-L-homocysteine + H(+). Functionally, specifically methylates the N4 position of cytidine in position 1402 (C1402) of 16S rRNA. The chain is Ribosomal RNA small subunit methyltransferase H from Acidovorax ebreus (strain TPSY) (Diaphorobacter sp. (strain TPSY)).